The primary structure comprises 442 residues: tRNA modification GTPase MnmE (442 aa).

Residues Arg21, Glu79, and Lys118 each contribute to the (6S)-5-formyl-5,6,7,8-tetrahydrofolate site. The 151-residue stretch at 215–365 folds into the TrmE-type G domain; that stretch reads GLKIAIVGKP…LENKLSSYCN (151 aa). Residues 225-230, 244-250, and 269-272 contribute to the GTP site; these read NVGKSS, TNEAGTT, and DTAG. 2 residues coordinate Mg(2+): Ser229 and Thr250. Position 442 (Lys442) interacts with (6S)-5-formyl-5,6,7,8-tetrahydrofolate.

It belongs to the TRAFAC class TrmE-Era-EngA-EngB-Septin-like GTPase superfamily. TrmE GTPase family. In terms of assembly, homodimer. Heterotetramer of two MnmE and two MnmG subunits. K(+) serves as cofactor.

The protein resides in the cytoplasm. Its function is as follows. Exhibits a very high intrinsic GTPase hydrolysis rate. Involved in the addition of a carboxymethylaminomethyl (cmnm) group at the wobble position (U34) of certain tRNAs, forming tRNA-cmnm(5)s(2)U34. This Mycoplasma mobile (strain ATCC 43663 / 163K / NCTC 11711) (Mesomycoplasma mobile) protein is tRNA modification GTPase MnmE.